The primary structure comprises 237 residues: Ribose-5-phosphate isomerase A (237 aa).

Residues T32 to T35, D85 to D88, and K99 to G102 each bind substrate. Residue E108 is the Proton acceptor of the active site. R126 serves as a coordination point for substrate.

Belongs to the ribose 5-phosphate isomerase family. In terms of assembly, homodimer.

The enzyme catalyses aldehydo-D-ribose 5-phosphate = D-ribulose 5-phosphate. The protein operates within carbohydrate degradation; pentose phosphate pathway; D-ribose 5-phosphate from D-ribulose 5-phosphate (non-oxidative stage): step 1/1. Catalyzes the reversible conversion of ribose-5-phosphate to ribulose 5-phosphate. The sequence is that of Ribose-5-phosphate isomerase A from Aeropyrum pernix (strain ATCC 700893 / DSM 11879 / JCM 9820 / NBRC 100138 / K1).